A 655-amino-acid chain; its full sequence is Ubiquilin-3 (655 aa).

Positions 22-98 (IKVTVKTPKD…LVIKRQHRAM (77 aa)) constitute a Ubiquitin-like domain. The segment at 102–124 (CPAASVPTQGPSPGSLPQPSSIY) is disordered. Low complexity predominate over residues 110–122 (QGPSPGSLPQPSS). In terms of domain architecture, STI1 spans 194 to 233 (NPHMQQLIQHNPEIGHILNNPEIMRQTLEFLRNPAMMQEM). Disordered regions lie at residues 277-330 (PFAT…PDIR), 364-399 (ASAL…LPEE), and 412-447 (FLRY…LVSG). Residues 279-290 (ATATTDNATTTT) are compositionally biased toward low complexity. Basic and acidic residues predominate over residues 318-330 (GRQDGDQDAPDIR). The span at 377-395 (VNRVPPSSPSSQEPGSGQP) shows a compositional bias: low complexity. The span at 432–441 (KSSTGHSTNL) shows a compositional bias: polar residues. Residues 609-655 (QLQPEAHFQVQLEQLRSMGFLNREANLQALIATGGDVDAAVEKLRQS) form the UBA domain.

Testis specific.

This chain is Ubiquilin-3 (UBQLN3), found in Homo sapiens (Human).